Consider the following 190-residue polypeptide: Ion-translocating oxidoreductase complex subunit B (190 aa).

The interval 1–26 (MTALWIAIAALSALGLLFGLVLGYAA) is hydrophobic. Positions 32 to 90 (EEDPVAEQVDEILPQSQCGQCGYPGCRPYAEAVANGEMINKCAPGGEQVMLKLAELLNV) constitute a 4Fe-4S domain. Cys-49, Cys-52, Cys-57, Cys-73, Cys-115, Cys-118, Cys-121, Cys-125, Cys-145, Cys-148, Cys-151, and Cys-155 together coordinate [4Fe-4S] cluster. 2 consecutive 4Fe-4S ferredoxin-type domains span residues 106–135 (QVAYIDEANCIGCTKCIQACPVDAIVGATR) and 136–165 (AMHTVITDLCTGCDLCVAPCPTDCIEMRPV).

Belongs to the 4Fe4S bacterial-type ferredoxin family. RnfB subfamily. The complex is composed of six subunits: RnfA, RnfB, RnfC, RnfD, RnfE and RnfG. The cofactor is [4Fe-4S] cluster.

The protein localises to the cell inner membrane. Functionally, part of a membrane-bound complex that couples electron transfer with translocation of ions across the membrane. The chain is Ion-translocating oxidoreductase complex subunit B from Serratia proteamaculans (strain 568).